The chain runs to 158 residues: HVA22-like protein f (158 aa).

3 helical membrane-spanning segments follow: residues 2-22, 41-61, and 63-83; these read GFII…VMLL, QQWL…LSVW, and VLAW…WLVL.

It belongs to the DP1 family.

The protein resides in the membrane. The protein is HVA22-like protein f (HVA22F) of Arabidopsis thaliana (Mouse-ear cress).